The primary structure comprises 499 residues: Tetrathionate hydrolase (499 aa).

The first 32 residues, 1 to 32 (MPSIVRNHGPHNKILLSALLLALFGWVPLASA), serve as a signal peptide directing secretion.

This sequence belongs to the tetrathionate hydrolase family. As to quaternary structure, homodimer.

The protein resides in the cell membrane. The catalysed reaction is tetrathionate + H2O = sulfur + thiosulfate + sulfate + H(+). Functionally, catalyzes the hydrolysis of tetrathionate to generate elemental sulfur, thiosulfate and sulfate. This Acidithiobacillus ferrooxidans (strain ATCC 23270 / DSM 14882 / CIP 104768 / NCIMB 8455) (Ferrobacillus ferrooxidans (strain ATCC 23270)) protein is Tetrathionate hydrolase.